Here is a 196-residue protein sequence, read N- to C-terminus: Peroxisome assembly protein 22 (196 aa).

The helical transmembrane segment at 15 to 37 (LWIAALVAASIVTISYKVYSSYI) threads the bilayer.

It belongs to the peroxin-22 family.

The protein localises to the peroxisome membrane. Functionally, involved in peroxisome biogenesis. The sequence is that of Peroxisome assembly protein 22 (PEX22) from Debaryomyces hansenii (strain ATCC 36239 / CBS 767 / BCRC 21394 / JCM 1990 / NBRC 0083 / IGC 2968) (Yeast).